An 88-amino-acid chain; its full sequence is Putative sulfur carrier protein AF_0554 (88 aa).

The active-site Cysteine persulfide intermediate is the Cys-26.

The protein belongs to the sulfur carrier protein TusA family.

This Archaeoglobus fulgidus (strain ATCC 49558 / DSM 4304 / JCM 9628 / NBRC 100126 / VC-16) protein is Putative sulfur carrier protein AF_0554.